Consider the following 76-residue polypeptide: MAETDPKTMQDITLVVETLLQQMQDKFQIMSDQIIGRIDDMSSRIDDLEKNIADLMTQAGVEELDPENKIPTAQKS.

The protein belongs to the HSBP1 family. In terms of assembly, homohexamer. Associates with heptad repeats of HSF1 trimers and probably also HSF1 monomers, and with HSP70. Association with HSF1 trimers and HSP70 coincides with attenuation of heat shock response and the conversion of HSF1 trimer to monomer.

The protein localises to the nucleus. In terms of biological role, negative regulator of the heat shock response. Negatively affects HSF1 DNA-binding activity. May have a role in the suppression of the activation of the stress response during the aging process. This is Heat shock factor-binding protein 1 (Hsbp1) from Mus musculus (Mouse).